Here is a 910-residue protein sequence, read N- to C-terminus: E3 ubiquitin-protein ligase MARCHF6 (910 aa).

Met-1 carries the N-acetylmethionine modification. The RING-CH-type zinc-finger motif lies at 1–62 (MDTAEEDICR…ELCKHRFAFT (62 aa)). Residues 1–91 (MDTAEEDICR…LVTSIGTAIR (91 aa)) lie on the Cytoplasmic side of the membrane. Zn(2+) contacts are provided by Cys-9, Cys-12, Cys-26, Cys-28, His-36, Cys-39, Cys-52, and Cys-55. A helical transmembrane segment spans residues 92 to 112 (YWFHYTLVAFAWLGVVPLTAC). At 113–142 (RIYKCLFTGSVSSLLTLPLDMLSTENLLAD) the chain is on the extracellular side. The chain crosses the membrane as a helical span at residues 143-163 (CLQGCFVVTCTLCAFISLVWL). Topologically, residues 164 to 283 (REQIVHGGAP…WERMLGLDGS (120 aa)) are cytoplasmic. The segment at 185-256 (AAGHHQNEAP…AADANNGAQD (72 aa)) is disordered. The segment covering 223 to 248 (DAQDDQAEEEEEDNEEEDDAGVEDAA) has biased composition (acidic residues). A helical transmembrane segment spans residues 284-304 (LVFLEHVFWVVSLNTLFILVF). The Extracellular portion of the chain corresponds to 305-336 (AFCPYHIGHFSLVGLGFEEHVQASHFEGLITT). The chain crosses the membrane as a helical span at residues 337 to 357 (IVGYILLAITLIICHGLATLV). Residues 358-376 (KFHRSRRLLGVCYIVVKVS) lie on the Cytoplasmic side of the membrane. A helical membrane pass occupies residues 377–397 (LLVVVEIGVFPLICGWWLDIC). Residues 398-421 (SLEMFDATLKDRELSFQSAPGTTM) lie on the Extracellular side of the membrane. The chain crosses the membrane as a helical span at residues 422–442 (FLHWLVGMVYVFYFASFILLL). Residues 443-480 (REVLRPGVLWFLRNLNDPDFNPVQEMIHLPIYRHLRRF) lie on the Cytoplasmic side of the membrane. Residues 481-501 (ILSVIVFGSIVLLMLWLPIRI) form a helical membrane-spanning segment. At 502-519 (IKSVLPNFLPYNVMLYSD) the chain is on the extracellular side. The chain crosses the membrane as a helical span at residues 520 to 540 (APVSELSLELLLLQVVLPALL). Residues 541–632 (EQGHTRQWLK…YRRPLNFPLR (92 aa)) are Cytoplasmic-facing. Residues 633 to 653 (IFLLIVFMCITLLIASLICLT) traverse the membrane as a helical segment. The Extracellular segment spans residues 654–678 (LPVFAGRWLMSFWTGTAKIHELYTA). Residues 679–699 (ACGLYVCWLTIRAVTVMVAWM) traverse the membrane as a helical segment. The Cytoplasmic portion of the chain corresponds to 700–721 (PQGRRVIFQKVKEWSLMIMKTL). A helical membrane pass occupies residues 722 to 742 (IVAVLLAGVVPLLLGLLFELV). Over 743–764 (IVAPLRVPLDQTPLFYPWQDWA) the chain is Extracellular. A helical membrane pass occupies residues 765-785 (LGVLHAKIIAAITLMGPQWWL). Topologically, residues 786–815 (KTVIEQVYANGIRNIDLHYIVRKLAAPVIS) are cytoplasmic. Residues 816–836 (VLLLSLCVPYVIASGVVPLLG) traverse the membrane as a helical segment. The Extracellular segment spans residues 837 to 848 (VTAEMQNLVHRR). The helical transmembrane segment at 849–869 (IYPFLLMVVVLMAILSFQVRQ) threads the bilayer. The Cytoplasmic portion of the chain corresponds to 870–910 (FKRLYEHIKNDKYLVGQRLVNYERKSGKQGSSPPPPQSSQE).

Interacts with DIO2. Interacts with SQLE. In terms of processing, auto-ubiquitinated, which results in proteasomal degradation. Deubiquitinated by USP19; protecting MARCHF6 from p97-mediated proteasomal degradation. In terms of tissue distribution, present in brain (at protein level).

It localises to the endoplasmic reticulum membrane. The enzyme catalyses S-ubiquitinyl-[E2 ubiquitin-conjugating enzyme]-L-cysteine + [acceptor protein]-L-lysine = [E2 ubiquitin-conjugating enzyme]-L-cysteine + N(6)-ubiquitinyl-[acceptor protein]-L-lysine.. It functions in the pathway protein modification; protein ubiquitination. Functionally, endoplasmic reticulum membrane-associated E3 ubiquitin ligase that plays a critical role in mitigating endoplasmic reticulum stress, the regulation of cholesterol and lipid homeostasis, and ferroptosis. Acts as a pivotal component of both the Ac/N-degron pathway (targeting the N-terminal acetyl group of substrates) and the ER-associated protein degradation-cytosol (ERAD-C) pathway (targeting misfolded substrates). For instance, mediates the degradation of Ac/N-degron-bearing proteins such as the G-protein regulator RGS2 and the lipid droplet protein PLIN2. Suppresses endoplasmic reticulum stress and ferroptosis through cytosolic POMC degradation. Prevents ferroptosis by acting as a NADPH sensor during lipid peroxidation through its C-terminal regulatory region. Facilitates also the degradation of selected endoplasmic reticulum proteins by associating with signal peptide peptidase for the turnover of endogenous tail-anchored proteins. Promotes ubiquitination of DIO2, leading to its degradation. By ubiquitinating and thereby modulating the stability of many proteins of the cholesterol pathway including SQLE, CYP51A1, CYP11A1 and HMGCR, acts as a crucial post-translational regulator of cholesterol synthesis. This is E3 ubiquitin-protein ligase MARCHF6 from Homo sapiens (Human).